Reading from the N-terminus, the 462-residue chain is ATP synthase subunit beta (462 aa).

ATP is bound at residue 150–157; sequence GGAGVGKT.

The protein belongs to the ATPase alpha/beta chains family. F-type ATPases have 2 components, CF(1) - the catalytic core - and CF(0) - the membrane proton channel. CF(1) has five subunits: alpha(3), beta(3), gamma(1), delta(1), epsilon(1). CF(0) has three main subunits: a(1), b(2) and c(9-12). The alpha and beta chains form an alternating ring which encloses part of the gamma chain. CF(1) is attached to CF(0) by a central stalk formed by the gamma and epsilon chains, while a peripheral stalk is formed by the delta and b chains.

The protein resides in the cell membrane. It carries out the reaction ATP + H2O + 4 H(+)(in) = ADP + phosphate + 5 H(+)(out). Its function is as follows. Produces ATP from ADP in the presence of a proton gradient across the membrane. The catalytic sites are hosted primarily by the beta subunits. In Wigglesworthia glossinidia brevipalpis, this protein is ATP synthase subunit beta.